The primary structure comprises 66 residues: uncharacterized protein (66 aa).

A hydrophobic region spans residues 1 to 20 (MIALAYLATVAIAAMVLAVA).

This is an uncharacterized protein from Streptomyces lividans.